We begin with the raw amino-acid sequence, 226 residues long: ATP synthase subunit a (226 aa).

6 consecutive transmembrane segments (helical) span residues 17–37 (FSYF…AMMA), 79–99 (LVAT…LPGF), 105–125 (SLNL…FEGI), 134–154 (FAHF…IEIV), 176–196 (LFLM…AYVL), and 199–219 (FMAF…LAGA).

This sequence belongs to the ATPase A chain family. F-type ATPases have 2 components, CF(1) - the catalytic core - and CF(0) - the membrane proton channel. CF(1) has five subunits: alpha(3), beta(3), gamma(1), delta(1), epsilon(1). CF(0) has three main subunits: a(1), b(2) and c(9-12). The alpha and beta chains form an alternating ring which encloses part of the gamma chain. CF(1) is attached to CF(0) by a central stalk formed by the gamma and epsilon chains, while a peripheral stalk is formed by the delta and b chains.

It is found in the cell inner membrane. In terms of biological role, key component of the proton channel; it plays a direct role in the translocation of protons across the membrane. The protein is ATP synthase subunit a of Campylobacter jejuni subsp. doylei (strain ATCC BAA-1458 / RM4099 / 269.97).